A 303-amino-acid polypeptide reads, in one-letter code: Coenzyme PQQ synthesis protein B (303 aa).

It belongs to the PqqB family.

Its pathway is cofactor biosynthesis; pyrroloquinoline quinone biosynthesis. Its function is as follows. May be involved in the transport of PQQ or its precursor to the periplasm. The sequence is that of Coenzyme PQQ synthesis protein B from Acinetobacter baumannii (strain AYE).